A 294-amino-acid chain; its full sequence is Aquaporin NIP2-2 (294 aa).

A run of 2 helical transmembrane segments spans residues 54–74 and 88–108; these read VISE…AASI and SVAG…ISGA. The NPA 1 motif lies at 111-113; the sequence is NPA. 3 helical membrane passes run 129-151, 169-189, and 197-217; these read VPFY…KAVL, ALLI…AVAT, and LAGL…GPVS. The short motif at 222 to 224 is the NPA 2 element; the sequence is NPA. The helical transmembrane segment at 235–255 threads the bilayer; that stretch reads VFTGLWIYFLGPVIGTLSGAW.

Belongs to the MIP/aquaporin (TC 1.A.8) family. NIP (TC 1.A.8.12) subfamily.

The protein resides in the membrane. Its function is as follows. Aquaporins facilitate the transport of water and small neutral solutes across cell membranes. The chain is Aquaporin NIP2-2 (NIP2-2) from Zea mays (Maize).